A 299-amino-acid chain; its full sequence is Acetylglutamate kinase (299 aa).

Residues 72–73, Arg94, and Asn196 contribute to the substrate site; that span reads GG.

This sequence belongs to the acetylglutamate kinase family. ArgB subfamily.

It localises to the cytoplasm. It catalyses the reaction N-acetyl-L-glutamate + ATP = N-acetyl-L-glutamyl 5-phosphate + ADP. Its pathway is amino-acid biosynthesis; L-arginine biosynthesis; N(2)-acetyl-L-ornithine from L-glutamate: step 2/4. In terms of biological role, catalyzes the ATP-dependent phosphorylation of N-acetyl-L-glutamate. This is Acetylglutamate kinase from Burkholderia cenocepacia (strain HI2424).